Here is a 325-residue protein sequence, read N- to C-terminus: MAERKATNKYYPPDWDPSKGSINQYRGQHHLRDRARKIDQGILIIRFEMPFSVWCLGCECHIGMGVRFNAEKKTVDKYFTSNIYSFKMKCHQCSNQFEIQNDPKNTDYKLISGLKKRIEQFNPEDSELPSSFIIKYDDNNNNNNNNNNNDNNDTLLKLENKKLDIEKGKKESTQLEKLQEIMTNRTINDYQLSSIMRKSFREKKKEDQIELERQKSKGIMIPLLKENQDDIDTAKDIDFNSNSLKRKLDESNKLKRELIKNESILKSTNNVNNNNNVNNNNNNNNNNKIEAIIRKKSKIDPSLFNNNVNKNKSKVNETFTSNLFK.

The stretch at Leu156–Glu262 forms a coiled coil.

The protein belongs to the CWC16 family.

The polypeptide is Coiled-coil domain-containing protein 130 homolog (Dictyostelium discoideum (Social amoeba)).